A 259-amino-acid polypeptide reads, in one-letter code: MKLNKRSVAHYALSDSPADHTGFLRSWGGPGSPPTPSGTGRRYWFVLKGNLLFSFETRESRVPLSLVVLEGCTVELAEAPVPEEFAFAIRFDAPGVRPHLLAADGQAAQEAWVKALSRASFGYMRLVVRELESQLQDARQSLALHRCASQRAVASCSKSQAPDHRAPDPENGHFLPRDRSSIGTVEERGIRPIGRDLTEWELQGPASLLLSMGQSPVSPESSCFSTLHDWYGKEIMELRRGWQQRAKGSQTENKSQNRP.

One can recognise a PH domain in the interval 17–121 (PADHTGFLRS…WVKALSRASF (105 aa)). A coiled-coil region spans residues 124 to 150 (MRLVVRELESQLQDARQSLALHRCASQ). The interval 155–178 (SCSKSQAPDHRAPDPENGHFLPRD) is disordered. A compositionally biased stretch (basic and acidic residues) spans 161–178 (APDHRAPDPENGHFLPRD). The F&amp;H motif lies at 223 to 235 (CFSTLHDWYGKEI).

The protein belongs to the sesquipedalian family. Forms homodimers and heterodimers with PHETA1. Interacts with OCRL and INPP5B.

Its subcellular location is the early endosome. The protein resides in the recycling endosome. It localises to the golgi apparatus. The protein localises to the trans-Golgi network. It is found in the cytoplasmic vesicle. Its subcellular location is the clathrin-coated vesicle. Functionally, plays a role in endocytic trafficking. Required for receptor recycling from endosomes, both to the trans-Golgi network and the plasma membrane. This is Sesquipedalian-2 from Mus musculus (Mouse).